We begin with the raw amino-acid sequence, 810 residues long: Volume-regulated anion channel subunit LRRC8A (810 aa).

An N-acetylmethionine modification is found at Met-1. Over 1-23 (MIPVTELRYFADTQPAYRILKPW) the chain is Cytoplasmic. A helical membrane pass occupies residues 24–47 (WDVFTDYISIVMLMIAVFGGTLQV). The Extracellular segment spans residues 48–123 (TQDKMICLPC…YENRLHWFAK (76 aa)). Cystine bridges form between Cys-54/Cys-310, Cys-57/Cys-65, and Cys-113/Cys-295. Residues Asn-66 and Asn-83 are each glycosylated (N-linked (GlcNAc...) asparagine). The helical transmembrane segment at 124–142 (YFPYLVLLHTLIFLACSNF) threads the bilayer. Over 143–264 (WFKFPRTSSK…EEGDIVYRLY (122 aa)) the chain is Cytoplasmic. Residue Thr-200 is modified to Phosphothreonine. Ser-202 carries the post-translational modification Phosphoserine. Thr-215 carries the post-translational modification Phosphothreonine. Phosphoserine is present on Ser-217. A helical membrane pass occupies residues 265–286 (MRQTIIKVIKFILIICYTVYYV). Over 287–316 (HNIKFDVDCTVDIESLTGYRTYRCAHPLAT) the chain is Extracellular. Residues 317–341 (LFKILASFYISLVIFYGLICMYTLW) traverse the membrane as a helical segment. The Cytoplasmic segment spans residues 342–810 (WMLRRSLKKY…RLWRADKEQA (469 aa)). LRR repeat units follow at residues 399 to 422 (ENKL…RLTK), 423 to 445 (NAQD…VFDL), 447 to 468 (ELEV…IAQL), 469 to 492 (TGLK…AFLR), 493 to 515 (ENLR…IYSL), 518 to 542 (LEEL…GLRE), 543 to 565 (LKRL…VTDV), 567 to 589 (VHLQ…SLKK), 590 to 613 (MANL…IFSL), 615 to 637 (NLQE…SFQH), 639 to 661 (HRLT…IGNL), 662 to 684 (TNLE…LFYC), 686 to 707 (KLRY…IGLL), 708 to 730 (QNLQ…LFQC), 732 to 753 (KLRA…VGEL), 754 to 776 (TNLT…LGEC), and 778 to 801 (LLKR…VKER). The short motif at 706-707 (LL) is the Di-leucine motif element.

The protein belongs to the LRRC8 family. Heterohexamer; oligomerizes with other LRRC8 proteins (LRRC8B, LRRC8C, LRRC8D and/or LRRC8E) to form a heterohexamer. Can form homohexamers in vitro, but these have lower conductance than heterohexamers. In vivo, the subunit composition may depend primarily on expression levels, and heterooligomeric channels containing various proportions of the different LRRC8 proteins may coexist. Interact with GRB2. Interacts with NOX4; this interaction prevents the ubiquitin-mediated degradation of LRRC8A. In terms of processing, N-glycosylated. Expressed in brain, kidney, ovary, lung, liver, heart, and fetal brain and liver. Found at high levels in bone marrow; lower levels are detected in peripheral blood cells. Expressed on T-cells as well as on B-lineage cells.

The protein resides in the cell membrane. It is found in the lysosome membrane. It carries out the reaction chloride(in) = chloride(out). It catalyses the reaction iodide(out) = iodide(in). The enzyme catalyses taurine(out) = taurine(in). The catalysed reaction is L-aspartate(out) = L-aspartate(in). It carries out the reaction L-glutamate(out) = L-glutamate(in). It catalyses the reaction myo-inositol(out) = myo-inositol(in). The enzyme catalyses 2',3'-cGAMP(out) = 2',3'-cGAMP(in). Its activity is regulated as follows. Inhibited by (4-[(2-butyl-6,7-dichloro-2-cyclopentyl-2,3-dihydro-1-oxo-1H-inden-5-yl)oxy]butanoic acid), which plugs the channel like a cork in a bottle by binding in the extracellular selectivity filter and sterically occluding ion conduction. Lipids may block conduction in closed heterohexameric channels. In terms of biological role, essential component of the volume-regulated anion channel (VRAC, also named VSOAC channel), an anion channel required to maintain a constant cell volume in response to extracellular or intracellular osmotic changes. The VRAC channel conducts iodide better than chloride and can also conduct organic osmolytes like taurine. Mediates efflux of amino acids, such as aspartate and glutamate, in response to osmotic stress. LRRC8A and LRRC8D are required for the uptake of the drug cisplatin. In complex with LRRC8C or LRRC8E, acts as a transporter of immunoreactive cyclic dinucleotide GMP-AMP (2'-3'-cGAMP), an immune messenger produced in response to DNA virus in the cytosol: mediates both import and export of 2'-3'-cGAMP, thereby promoting transfer of 2'-3'-cGAMP to bystander cells. In contrast, complexes containing LRRC8D inhibit transport of 2'-3'-cGAMP. Required for in vivo channel activity, together with at least one other family member (LRRC8B, LRRC8C, LRRC8D or LRRC8E); channel characteristics depend on the precise subunit composition. Can form functional channels by itself (in vitro). Involved in B-cell development: required for the pro-B cell to pre-B cell transition. Also required for T-cell development. Required for myoblast differentiation: VRAC activity promotes membrane hyperpolarization and regulates insulin-stimulated glucose metabolism and oxygen consumption. Also acts as a regulator of glucose-sensing in pancreatic beta cells: VRAC currents, generated in response to hypotonicity- or glucose-induced beta cell swelling, depolarize cells, thereby causing electrical excitation, leading to increase glucose sensitivity and insulin secretion. Also plays a role in lysosome homeostasis by forming functional lysosomal VRAC channels in response to low cytoplasmic ionic strength condition: lysosomal VRAC channels are necessary for the formation of large lysosome-derived vacuoles, which store and then expel excess water to maintain cytosolic water homeostasis. Acts as a key factor in NLRP3 inflammasome activation by modulating itaconate efflux and mitochondria function. This Homo sapiens (Human) protein is Volume-regulated anion channel subunit LRRC8A.